The chain runs to 121 residues: Large ribosomal subunit protein bL12 (121 aa).

This sequence belongs to the bacterial ribosomal protein bL12 family. As to quaternary structure, homodimer. Part of the ribosomal stalk of the 50S ribosomal subunit. Forms a multimeric L10(L12)X complex, where L10 forms an elongated spine to which 2 to 4 L12 dimers bind in a sequential fashion. Binds GTP-bound translation factors.

Forms part of the ribosomal stalk which helps the ribosome interact with GTP-bound translation factors. Is thus essential for accurate translation. This Clostridium novyi (strain NT) protein is Large ribosomal subunit protein bL12.